A 117-amino-acid polypeptide reads, in one-letter code: Nascent polypeptide-associated complex protein (117 aa).

Residues 3–72 (PVNPRDLEKM…YTVEKPREET (70 aa)) form the NAC-A/B domain.

The protein belongs to the NAC-alpha family. Homodimer. Interacts with the ribosome. Binds ribosomal RNA.

Its function is as follows. Contacts the emerging nascent chain on the ribosome. The chain is Nascent polypeptide-associated complex protein from Aeropyrum pernix (strain ATCC 700893 / DSM 11879 / JCM 9820 / NBRC 100138 / K1).